The chain runs to 115 residues: Large ribosomal subunit protein bL19 (115 aa).

This sequence belongs to the bacterial ribosomal protein bL19 family.

In terms of biological role, this protein is located at the 30S-50S ribosomal subunit interface and may play a role in the structure and function of the aminoacyl-tRNA binding site. In Buchnera aphidicola subsp. Cinara cedri (strain Cc), this protein is Large ribosomal subunit protein bL19.